The chain runs to 219 residues: Oligoribonuclease (219 aa).

The 166-residue stretch at 19 to 184 (LVWVDLEMTG…ADIVESIREL (166 aa)) folds into the Exonuclease domain. The active site involves Tyr-141.

Belongs to the oligoribonuclease family.

The protein localises to the cytoplasm. Its function is as follows. 3'-to-5' exoribonuclease specific for small oligoribonucleotides. The chain is Oligoribonuclease from Corynebacterium glutamicum (strain R).